Reading from the N-terminus, the 635-residue chain is Kelch-like protein 31 (635 aa).

In terms of domain architecture, BTB spans 74-138; it reads CDLTVATKSK…AYSGKLTLSL (65 aa). The region spanning 173–274 is the BACK domain; sequence CMYVVNIADT…TPQDLVSHVQ (102 aa). Kelch repeat units lie at residues 318–366, 367–420, 421–467, 469–514, 516–566, and 567–615; these read VLLT…VLDG, FLYV…TFNG, LLFA…VIDG, ILVS…TVGD, AYVL…TLNN, and KIYL…VVTI.

In terms of tissue distribution, strongly expressed in fast skeletal muscle, and weakly in heart. Not expressed in other tissues.

The polypeptide is Kelch-like protein 31 (klhl31) (Danio rerio (Zebrafish)).